The primary structure comprises 859 residues: Cadherin-related family member 1 (859 aa).

An N-terminal signal peptide occupies residues 1–19 (MRRCRWAALALGLLRLCLA). The Extracellular portion of the chain corresponds to 20–700 (QANFAPHFFD…LIQTKDNPMK (681 aa)). Cadherin domains follow at residues 36 to 135 (NGNM…APRF), 136 to 246 (IQEP…APVF), 247 to 353 (VGTP…PPTF), 359 to 472 (PQNR…VPKF), 473 to 576 (DSLY…PPQF), and 573 to 688 (PPQF…SPMA). N-linked (GlcNAc...) asparagine glycosylation is found at Asn-58 and Asn-89. A glycan (N-linked (GlcNAc...) asparagine) is linked at Asn-296. The helical transmembrane segment at 701 to 721 (AVGVLAGTMATVVAITVLIST) threads the bilayer. Residues 722–859 (ATFWRNKKSN…KKSVHNKAYF (138 aa)) are Cytoplasmic-facing. The disordered stretch occupies residues 770-838 (KEKPPNENCN…PKTMGSPVQS (69 aa)). The segment covering 775 to 791 (NENCNNNSPESSLLPRA) has biased composition (low complexity).

Interacts with PROM1. Undergoes proteolytic cleavage; produces a soluble 95 kDa N-terminal fragment and a 25 kDa cell-associated C-terminal fragment.

The protein resides in the cell membrane. In terms of biological role, potential calcium-dependent cell-adhesion protein. May be required for the structural integrity of the outer segment (OS) of photoreceptor cells. This Homo sapiens (Human) protein is Cadherin-related family member 1.